A 450-amino-acid chain; its full sequence is ATP-dependent protease ATPase subunit HslU (450 aa).

Residues valine 27, 69–74 (GVGKTE), aspartate 263, glutamate 328, and arginine 400 each bind ATP.

Belongs to the ClpX chaperone family. HslU subfamily. In terms of assembly, a double ring-shaped homohexamer of HslV is capped on each side by a ring-shaped HslU homohexamer. The assembly of the HslU/HslV complex is dependent on binding of ATP.

It localises to the cytoplasm. Functionally, ATPase subunit of a proteasome-like degradation complex; this subunit has chaperone activity. The binding of ATP and its subsequent hydrolysis by HslU are essential for unfolding of protein substrates subsequently hydrolyzed by HslV. HslU recognizes the N-terminal part of its protein substrates and unfolds these before they are guided to HslV for hydrolysis. This Aquifex aeolicus (strain VF5) protein is ATP-dependent protease ATPase subunit HslU.